The primary structure comprises 288 residues: Disulfide-bond oxidoreductase YghU (288 aa).

Glutathione is bound by residues Asn26, 52-54 (TPN), Gln87, Ile101, 117-118 (ES), Gln151, and Arg178. One can recognise a GST N-terminal domain in the interval 46 to 133 (QLYSLGTPNG…YLAEKFGYFL (88 aa)). Residues 139 to 265 (KRTETMNWLF…RIVNRTNGPL (127 aa)) form the GST C-terminal domain. Positions 260–288 (RTNGPLNEQLHERHDASDFETNTEDKRQG) are disordered. Residues 268–288 (QLHERHDASDFETNTEDKRQG) show a composition bias toward basic and acidic residues.

The protein belongs to the GST superfamily. Nu-class GSH transferase family. As to quaternary structure, homodimer.

Its function is as follows. Exhibits a robust glutathione (GSH)-dependent disulfide-bond reductase activity toward the model substrate, 2-hydroxyethyl disulfide; the actual physiological substrates are not known. Also displays a modest GSH-dependent peroxidase activity toward several organic hydroperoxides, such as cumene hydroperoxide and linoleic acid 13(S)-hydroperoxide, but does not reduce H(2)O(2) or tert-butyl hydroperoxide at appreciable rates. Exhibits little or no GSH transferase activity with most typical electrophilic substrates, and has no detectable transferase activity toward 1-chloro-2,4-dinitrobenzene (CDNB) with glutathionylspermidine (GspSH) as the nucleophilic substrate. The polypeptide is Disulfide-bond oxidoreductase YghU (yghU) (Escherichia coli (strain K12)).